A 258-amino-acid polypeptide reads, in one-letter code: Synapse differentiation-inducing gene protein 1 (258 aa).

The Cytoplasmic segment spans residues Met-1 to His-181. Ser-137 carries the phosphoserine modification. A helical membrane pass occupies residues Leu-182–Tyr-202. The Extracellular segment spans residues Leu-203–Phe-228. Positions Leu-229–Ile-249 form an intramembrane region, helical. Residues Ala-250–Leu-258 are Extracellular-facing.

The protein belongs to the CD225/Dispanin family. As to quaternary structure, homodimer. Interacts with GRIA1 and GRIA2.

Its subcellular location is the cell membrane. The protein resides in the early endosome membrane. It localises to the postsynaptic density membrane. The protein localises to the synapse. It is found in the cell projection. Its subcellular location is the dendrite. The protein resides in the dendritic spine. May regulate AMPA receptor content at nascent synapses, and have a role in postsynaptic development and maturation. The sequence is that of Synapse differentiation-inducing gene protein 1 (SYNDIG1) from Macaca fascicularis (Crab-eating macaque).